Consider the following 167-residue polypeptide: uncharacterized protein (167 aa).

2 helical membrane-spanning segments follow: residues 21–41 (KIGLAIFLIGAFINLIHIYKP) and 87–107 (MIITFILVQTTLITLDLYVFG). Residues 136 to 159 (RKQRLKEQREKKEQKKEQKKEKKT) show a composition bias toward basic and acidic residues. A disordered region spans residues 136-167 (RKQRLKEQREKKEQKKEQKKEKKTERRKKKKL).

The protein localises to the membrane. This is an uncharacterized protein from Schizosaccharomyces pombe (strain 972 / ATCC 24843) (Fission yeast).